Reading from the N-terminus, the 122-residue chain is MLKKPDRNALRDKRRRRVRKKIRGTAERPRLNVFRSLQNIYAQIIDDDRGVTLVSASTLAPELKGKLPSGGNTAAAAAVGELLAKKAIEAGIKRVVFDRAGYVYHGRVKALAEAARAGGLEF.

Positions 1–11 (MLKKPDRNALR) are enriched in basic and acidic residues. Residues 1-22 (MLKKPDRNALRDKRRRRVRKKI) form a disordered region. Positions 12 to 22 (DKRRRRVRKKI) are enriched in basic residues.

The protein belongs to the universal ribosomal protein uL18 family. Part of the 50S ribosomal subunit; part of the 5S rRNA/L5/L18/L25 subcomplex. Contacts the 5S and 23S rRNAs.

Its function is as follows. This is one of the proteins that bind and probably mediate the attachment of the 5S RNA into the large ribosomal subunit, where it forms part of the central protuberance. The polypeptide is Large ribosomal subunit protein uL18 (Pelotomaculum thermopropionicum (strain DSM 13744 / JCM 10971 / SI)).